The primary structure comprises 207 residues: Imidazoleglycerol-phosphate dehydratase (207 aa).

It belongs to the imidazoleglycerol-phosphate dehydratase family.

Its subcellular location is the cytoplasm. The catalysed reaction is D-erythro-1-(imidazol-4-yl)glycerol 3-phosphate = 3-(imidazol-4-yl)-2-oxopropyl phosphate + H2O. Its pathway is amino-acid biosynthesis; L-histidine biosynthesis; L-histidine from 5-phospho-alpha-D-ribose 1-diphosphate: step 6/9. This is Imidazoleglycerol-phosphate dehydratase from Mycobacterium avium (strain 104).